The chain runs to 727 residues: Elongation factor 2 (727 aa).

Residues 19 to 260 (DQIRNIGICA…MVVTHLPNPV (242 aa)) form the tr-type G domain. Residues 28–35 (AHIDHGKT), 94–98 (DTPGH), and 148–151 (NKVD) contribute to the GTP site. Histidine 603 carries the diphthamide modification.

It belongs to the TRAFAC class translation factor GTPase superfamily. Classic translation factor GTPase family. EF-G/EF-2 subfamily.

It localises to the cytoplasm. Its function is as follows. Catalyzes the GTP-dependent ribosomal translocation step during translation elongation. During this step, the ribosome changes from the pre-translocational (PRE) to the post-translocational (POST) state as the newly formed A-site-bound peptidyl-tRNA and P-site-bound deacylated tRNA move to the P and E sites, respectively. Catalyzes the coordinated movement of the two tRNA molecules, the mRNA and conformational changes in the ribosome. The polypeptide is Elongation factor 2 (Methanococcus aeolicus (strain ATCC BAA-1280 / DSM 17508 / OCM 812 / Nankai-3)).